The sequence spans 193 residues: Thymidine kinase (193 aa).

ATP is bound by residues 9 to 16 (STMNAGKS) and 87 to 90 (DEAQ). Glutamate 88 functions as the Proton acceptor in the catalytic mechanism. Positions 145, 147, 182, and 185 each coordinate Zn(2+).

It belongs to the thymidine kinase family. As to quaternary structure, homotetramer.

It is found in the cytoplasm. It carries out the reaction thymidine + ATP = dTMP + ADP + H(+). The sequence is that of Thymidine kinase from Haemophilus influenzae (strain ATCC 51907 / DSM 11121 / KW20 / Rd).